The chain runs to 178 residues: Nucleoside triphosphate/diphosphate phosphatase (178 aa).

The active-site Proton donor is the arginine 23. Mg(2+) contacts are provided by asparagine 87, aspartate 103, aspartate 105, aspartate 107, aspartate 120, and glutamate 123.

This sequence belongs to the Ntdp family. Requires Mg(2+) as cofactor.

The enzyme catalyses a ribonucleoside 5'-triphosphate + H2O = a ribonucleoside 5'-diphosphate + phosphate + H(+). It catalyses the reaction a ribonucleoside 5'-diphosphate + H2O = a ribonucleoside 5'-phosphate + phosphate + H(+). Functionally, has nucleoside phosphatase activity towards nucleoside triphosphates and nucleoside diphosphates. This is Nucleoside triphosphate/diphosphate phosphatase from Latilactobacillus sakei subsp. sakei (strain 23K) (Lactobacillus sakei subsp. sakei).